Consider the following 643-residue polypeptide: Threonine--tRNA ligase (643 aa).

The region spanning M1–T61 is the TGS domain. The segment at D243–P534 is catalytic. C334, H385, and H511 together coordinate Zn(2+).

Belongs to the class-II aminoacyl-tRNA synthetase family. As to quaternary structure, homodimer. Zn(2+) is required as a cofactor.

The protein localises to the cytoplasm. It carries out the reaction tRNA(Thr) + L-threonine + ATP = L-threonyl-tRNA(Thr) + AMP + diphosphate + H(+). Catalyzes the attachment of threonine to tRNA(Thr) in a two-step reaction: L-threonine is first activated by ATP to form Thr-AMP and then transferred to the acceptor end of tRNA(Thr). Also edits incorrectly charged L-seryl-tRNA(Thr). The sequence is that of Threonine--tRNA ligase from Mannheimia succiniciproducens (strain KCTC 0769BP / MBEL55E).